Consider the following 396-residue polypeptide: Methionine import ATP-binding protein MetN 2 (396 aa).

The ABC transporter domain maps to 41–280 (VSFELVGKVF…PRHGATRALL (240 aa)). Residue 77 to 84 (GRSGAGKS) coordinates ATP.

This sequence belongs to the ABC transporter superfamily. Methionine importer (TC 3.A.1.24) family. In terms of assembly, the complex is composed of two ATP-binding proteins (MetN), two transmembrane proteins (MetI) and a solute-binding protein (MetQ).

Its subcellular location is the cell inner membrane. The enzyme catalyses L-methionine(out) + ATP + H2O = L-methionine(in) + ADP + phosphate + H(+). It catalyses the reaction D-methionine(out) + ATP + H2O = D-methionine(in) + ADP + phosphate + H(+). In terms of biological role, part of the ABC transporter complex MetNIQ involved in methionine import. Responsible for energy coupling to the transport system. This is Methionine import ATP-binding protein MetN 2 from Burkholderia pseudomallei (strain K96243).